The following is a 492-amino-acid chain: La-related protein 6 (492 aa).

The segment at 1 to 87 is disordered; that stretch reads MAQLGEQTLP…REDLEPEWRP (87 aa). An N-acetylalanine modification is found at alanine 2. Residues 24 to 37 show a composition bias toward acidic residues; the sequence is EAEDLEDLEEEDEG. Phosphoserine occurs at positions 56 and 58. A compositionally biased stretch (polar residues) spans 65 to 74; the sequence is GHSSATTSGG. The HTH La-type RNA-binding domain occupies 86 to 177; it reads RPPDEELIRK…RRTTPVPLFP (92 aa). Residues 184 to 296 form the RRM domain; that stretch reads KMLLVYDLHL…KAVLIGMKPP (113 aa). The short motif at 186 to 193 is the Nuclear export signal element; the sequence is LLVYDLHL. Disordered regions lie at residues 292-398 and 466-492; these read GMKP…KSPL and VGVL…RACV. The Nuclear localization signal signature appears at 296 to 302; it reads PKKKPLK. A compositionally biased stretch (low complexity) spans 332-346; that stretch reads DESSANSSSDPESNP. Polar residues predominate over residues 359 to 386; it reads NKLSPSGHQNIFLSPNASPCSSPWSSPL. The region spanning 427-485 is the SUZ-C domain; that stretch reads PSGSPWVRRRRQAEMGTQEKSPGASPLLSRRMQTADGLPVGVLRLPRGPDNTRGFHGGH. A compositionally biased stretch (basic and acidic residues) spans 483–492; sequence GGHERGRACV.

In terms of assembly, interacts (via the HTH domain) with VIM/vimentin. Interacts (via C-terminus) with non-muscle myosin MYH10. Interacts (via C-terminus) with DHX9. Expressed in numerous tissues. Highest expression in heart and brain, intermediate in kidney, skeletal muscle and testis, lowest expression in testis (at protein level).

Its subcellular location is the cytoplasm. The protein resides in the nucleus. In terms of biological role, regulates the coordinated translation of type I collagen alpha-1 and alpha-2 mRNAs, CO1A1 and CO1A2. Stabilizes mRNAs through high-affinity binding of a stem-loop structure in their 5' UTR. This regulation requires VIM and MYH10 filaments, and the helicase DHX9. The polypeptide is La-related protein 6 (Larp6) (Mus musculus (Mouse)).